Here is a 478-residue protein sequence, read N- to C-terminus: Microfibrillar-associated protein 1 (478 aa).

Over residues 1–20 (MSAATAAAAASGIQSTAGAI) the composition is skewed to low complexity. Disordered regions lie at residues 1-276 (MSAA…RRAT) and 456-478 (NEHAGGMRQQFDKPTGSKRKKME). The segment covering 53–62 (SSEESDDDDF) has biased composition (acidic residues). The segment covering 107–128 (DDPRLRRLRQRPVDMEDMERER) has biased composition (basic and acidic residues). Residues 140 to 153 (IMESDSEDEEEDEG) show a composition bias toward acidic residues. Residues 160 to 170 (RGTNKITLASE) are compositionally biased toward polar residues. The segment covering 171–181 (SDTDAELSDTE) has biased composition (acidic residues). Residues 197–212 (QREEEVLQKEDEKQSE) are compositionally biased toward basic and acidic residues. Residues 214–231 (SESESSEYEEETESEEDN) show a composition bias toward acidic residues. The tract at residues 229–478 (EDNEPRLKPL…PTGSKRKKME (250 aa)) is interaction with Prp38. Positions 245–268 (RATIQEKEREAQKQKQLEAEAKRA) are enriched in basic and acidic residues.

The protein belongs to the MFAP1 family. Component of the spliceosome B complex. Interacts (via C-terminus) with Prp38.

Its subcellular location is the nucleus. Functionally, required for pre-mRNA splicing. The protein is Microfibrillar-associated protein 1 of Drosophila melanogaster (Fruit fly).